The chain runs to 291 residues: Oxidative stress-responsive serine-rich protein 1 (291 aa).

Residues 48–174 are disordered; sequence EDAKPKSACA…SSDAPQVSQA (127 aa). Residues 65 to 83 show a composition bias toward basic residues; that stretch reads STRKSSRGAVRTQRRRRSK. Residues 132–142 are compositionally biased toward polar residues; it reads ECSSSLDTNHT. 2 positions are modified to phosphothreonine: T142 and T232.

The chain is Oxidative stress-responsive serine-rich protein 1 (OSER1) from Bos taurus (Bovine).